A 1581-amino-acid chain; its full sequence is Pentafunctional AROM polypeptide (1581 aa).

The tract at residues 1-383 (MKEIIKLSIL…YEKKASSVSD (383 aa)) is 3-dehydroquinate synthase. NAD(+) contacts are provided by residues 43–45 (DSN), 80–83 (EKSK), 111–113 (GGV), and D116. A 7-phospho-2-dehydro-3-deoxy-D-arabino-heptonate-binding site is contributed by R127. 136–137 (TT) provides a ligand contact to NAD(+). 7-phospho-2-dehydro-3-deoxy-D-arabino-heptonate contacts are provided by D143 and K149. K158 is an NAD(+) binding site. N159 is a binding site for 7-phospho-2-dehydro-3-deoxy-D-arabino-heptonate. Residues 176–179 (FLET) and N187 each bind NAD(+). E191 is a Zn(2+) binding site. 7-phospho-2-dehydro-3-deoxy-D-arabino-heptonate-binding positions include 191 to 194 (ELIK) and K249. The active-site Proton acceptor; for 3-dehydroquinate synthase activity is E259. 7-phospho-2-dehydro-3-deoxy-D-arabino-heptonate is bound by residues 263-267 (RTLLN) and H270. H270 provides a ligand contact to Zn(2+). Catalysis depends on H274, which acts as the Proton acceptor; for 3-dehydroquinate synthase activity. 2 residues coordinate 7-phospho-2-dehydro-3-deoxy-D-arabino-heptonate: H286 and K355. H286 serves as a coordination point for Zn(2+). Positions 396–845 (LYGIPLNAFQ…WDILNSTFKV (450 aa)) are EPSP synthase. C827 (for EPSP synthase activity) is an active-site residue. A shikimate kinase region spans residues 868-1065 (ECTIFLIGMR…LKKKRSYFLS (198 aa)). 875-882 (GMRGAGKT) is a binding site for ATP. The tract at residues 1066–1285 (LAFSDLENIF…IAPGQLSIKE (220 aa)) is 3-dehydroquinase. Catalysis depends on H1189, which acts as the Proton acceptor; for 3-dehydroquinate dehydratase activity. The Schiff-base intermediate with substrate; for 3-dehydroquinate dehydratase activity role is filled by K1217. Positions 1298–1581 (EKKYFLFGKP…VKYAILGPNK (284 aa)) are shikimate dehydrogenase.

In the N-terminal section; belongs to the sugar phosphate cyclases superfamily. Dehydroquinate synthase family. The protein in the 2nd section; belongs to the EPSP synthase family. It in the 3rd section; belongs to the shikimate kinase family. This sequence in the 4th section; belongs to the type-I 3-dehydroquinase family. In the C-terminal section; belongs to the shikimate dehydrogenase family. As to quaternary structure, homodimer. Zn(2+) serves as cofactor.

The protein resides in the cytoplasm. It carries out the reaction 7-phospho-2-dehydro-3-deoxy-D-arabino-heptonate = 3-dehydroquinate + phosphate. The catalysed reaction is 3-dehydroquinate = 3-dehydroshikimate + H2O. It catalyses the reaction shikimate + NADP(+) = 3-dehydroshikimate + NADPH + H(+). The enzyme catalyses shikimate + ATP = 3-phosphoshikimate + ADP + H(+). It carries out the reaction 3-phosphoshikimate + phosphoenolpyruvate = 5-O-(1-carboxyvinyl)-3-phosphoshikimate + phosphate. It participates in metabolic intermediate biosynthesis; chorismate biosynthesis; chorismate from D-erythrose 4-phosphate and phosphoenolpyruvate: step 2/7. The protein operates within metabolic intermediate biosynthesis; chorismate biosynthesis; chorismate from D-erythrose 4-phosphate and phosphoenolpyruvate: step 3/7. Its pathway is metabolic intermediate biosynthesis; chorismate biosynthesis; chorismate from D-erythrose 4-phosphate and phosphoenolpyruvate: step 4/7. It functions in the pathway metabolic intermediate biosynthesis; chorismate biosynthesis; chorismate from D-erythrose 4-phosphate and phosphoenolpyruvate: step 5/7. It participates in metabolic intermediate biosynthesis; chorismate biosynthesis; chorismate from D-erythrose 4-phosphate and phosphoenolpyruvate: step 6/7. In terms of biological role, the AROM polypeptide catalyzes 5 consecutive enzymatic reactions in prechorismate polyaromatic amino acid biosynthesis. In Pneumocystis carinii, this protein is Pentafunctional AROM polypeptide (arom).